We begin with the raw amino-acid sequence, 146 residues long: Putative ankyrin repeat protein FPV224 (146 aa).

ANK repeat units lie at residues 9 to 38, 42 to 79, 94 to 126, and 127 to 145; these read SLSTPLHHAINLLKTDIVSLLMQYKADASI, KGITPFCYAMYLGYYGVNKDILNIITRYNSINGTTRDI, YVFVNLHDAARLGYVYILKKIIYNGKNINRIDE, and YYYSALHYAVKSSNLKAVN.

The polypeptide is Putative ankyrin repeat protein FPV224 (Fowlpox virus (strain NVSL) (FPV)).